We begin with the raw amino-acid sequence, 237 residues long: AA9 family lytic polysaccharide monooxygenase C (237 aa).

The signal sequence occupies residues M1–A15. Residues H16 and H99 each coordinate Cu(2+). 2 cysteine pairs are disulfide-bonded: C54/C185 and C155/C237. The N-linked (GlcNAc...) asparagine glycan is linked to N112. The O2 site is built by H171 and Q180. Y182 contributes to the Cu(2+) binding site.

This sequence belongs to the polysaccharide monooxygenase AA9 family. The cofactor is Cu(2+).

The protein localises to the secreted. The catalysed reaction is [(1-&gt;4)-beta-D-glucosyl]n+m + reduced acceptor + O2 = 4-dehydro-beta-D-glucosyl-[(1-&gt;4)-beta-D-glucosyl]n-1 + [(1-&gt;4)-beta-D-glucosyl]m + acceptor + H2O.. Is able to utilize various natural phenolic compounds as reducing agents. Most of these reducing agents are present in plants, either free or as lignin building blocks, such as sinapic acid, or as flavonoids such as catechin and dopamine. Phenolic compounds with 1,2-benzenediol and 1,2,3-benzenetriol moieties yield the highest release of oxidized and non-oxidized glucooligosaccharides from cellulose compared to monophenols or sulfur-containing compounds. Lytic polysaccharide monooxygenase (LPMO) that depolymerizes crystalline and amorphous polysaccharides via the oxidation of scissile alpha- or beta-(1-4)-glycosidic bonds, yielding C4 oxidation products. Catalysis by LPMOs requires the reduction of the active-site copper from Cu(II) to Cu(I) by a reducing agent and H(2)O(2) or O(2) as a cosubstrate. Shows oxidative cleavage of beta-(1-3, 1-4)-glucan from oat spelt or xyloglucan from tamarind seed, in addition to cellulose. In Thermothelomyces thermophilus (strain ATCC 42464 / BCRC 31852 / DSM 1799) (Sporotrichum thermophile), this protein is AA9 family lytic polysaccharide monooxygenase C.